A 98-amino-acid polypeptide reads, in one-letter code: Large ribosomal subunit protein uL23 (98 aa).

The protein belongs to the universal ribosomal protein uL23 family. Part of the 50S ribosomal subunit. Contacts protein L29, and trigger factor when it is bound to the ribosome.

In terms of biological role, one of the early assembly proteins it binds 23S rRNA. One of the proteins that surrounds the polypeptide exit tunnel on the outside of the ribosome. Forms the main docking site for trigger factor binding to the ribosome. This is Large ribosomal subunit protein uL23 from Nitrobacter hamburgensis (strain DSM 10229 / NCIMB 13809 / X14).